We begin with the raw amino-acid sequence, 178 residues long: ATP-dependent protease subunit HslV (178 aa).

Residue Thr8 is part of the active site. Gly163, Cys166, and Thr169 together coordinate Na(+).

The protein belongs to the peptidase T1B family. HslV subfamily. As to quaternary structure, a double ring-shaped homohexamer of HslV is capped on each side by a ring-shaped HslU homohexamer. The assembly of the HslU/HslV complex is dependent on binding of ATP.

The protein localises to the cytoplasm. The enzyme catalyses ATP-dependent cleavage of peptide bonds with broad specificity.. With respect to regulation, allosterically activated by HslU binding. In terms of biological role, protease subunit of a proteasome-like degradation complex believed to be a general protein degrading machinery. The chain is ATP-dependent protease subunit HslV from Treponema denticola (strain ATCC 35405 / DSM 14222 / CIP 103919 / JCM 8153 / KCTC 15104).